Consider the following 67-residue polypeptide: Large ribosomal subunit protein uL29 (67 aa).

Belongs to the universal ribosomal protein uL29 family.

This chain is Large ribosomal subunit protein uL29, found in Wolbachia pipientis subsp. Culex pipiens (strain wPip).